The sequence spans 210 residues: dTTP/UTP pyrophosphatase (210 aa).

D80 (proton acceptor) is an active-site residue.

It belongs to the Maf family. YhdE subfamily. Requires a divalent metal cation as cofactor.

Its subcellular location is the cytoplasm. It carries out the reaction dTTP + H2O = dTMP + diphosphate + H(+). It catalyses the reaction UTP + H2O = UMP + diphosphate + H(+). Functionally, nucleoside triphosphate pyrophosphatase that hydrolyzes dTTP and UTP. May have a dual role in cell division arrest and in preventing the incorporation of modified nucleotides into cellular nucleic acids. This chain is dTTP/UTP pyrophosphatase, found in Nitratidesulfovibrio vulgaris (strain ATCC 29579 / DSM 644 / CCUG 34227 / NCIMB 8303 / VKM B-1760 / Hildenborough) (Desulfovibrio vulgaris).